The following is a 431-amino-acid chain: Isochorismate synthase MenF (431 aa).

Lysine 190 functions as the Proton acceptor in the catalytic mechanism. Residue glutamate 240 is the Proton donor of the active site. Residues glutamate 284 and glutamate 416 each contribute to the Mg(2+) site.

It belongs to the isochorismate synthase family. As to quaternary structure, homodimer. It depends on Mg(2+) as a cofactor.

It carries out the reaction chorismate = isochorismate. It functions in the pathway quinol/quinone metabolism; 1,4-dihydroxy-2-naphthoate biosynthesis; 1,4-dihydroxy-2-naphthoate from chorismate: step 1/7. Its pathway is quinol/quinone metabolism; menaquinone biosynthesis. Catalyzes the conversion of chorismate to isochorismate. Can also catalyze the reverse reaction, but with a lower efficiency. This Escherichia coli (strain K12) protein is Isochorismate synthase MenF.